The following is a 251-amino-acid chain: Probable transcriptional regulatory protein SYNPCC7002_A0851 (251 aa).

In terms of domain architecture, Response regulatory spans 20 to 141 (RILVVEDEAV…ELVARCRALL (122 aa)). Position 76 is a 4-aspartylphosphate (Asp76). The segment at residues 153-251 (NSVRQFKDIS…TVRGFGYRFG (99 aa)) is a DNA-binding region (ompR/PhoB-type).

In terms of processing, phosphorylation.

This is Probable transcriptional regulatory protein SYNPCC7002_A0851 from Picosynechococcus sp. (strain ATCC 27264 / PCC 7002 / PR-6) (Agmenellum quadruplicatum).